Consider the following 205-residue polypeptide: uncharacterized protein (205 aa).

The next 3 membrane-spanning stretches (helical) occupy residues 45 to 65, 119 to 139, and 144 to 164; these read LFFY…FLVI, VFWL…VTAF, and FEWM…LWGY.

This sequence belongs to the TVP23 family.

The protein resides in the membrane. This is an uncharacterized protein from Caenorhabditis elegans.